We begin with the raw amino-acid sequence, 490 residues long: Cheilanthifoline synthase (490 aa).

Residues 2 to 22 (EESLWVVTATVVVVFAIAKLL) traverse the membrane as a helical segment. Position 432 (Cys432) interacts with heme.

It belongs to the cytochrome P450 family. The cofactor is heme. Expressed in roots. Detected in leaves and stems.

It is found in the endoplasmic reticulum membrane. The enzyme catalyses (S)-scoulerine + reduced [NADPH--hemoprotein reductase] + O2 = (S)-cheilanthifoline + oxidized [NADPH--hemoprotein reductase] + 2 H2O + H(+). It participates in alkaloid biosynthesis. In terms of biological role, methylenedioxy bridge-forming cytochrome P450 involved in the biosynthesis of isoquinoline alkaloids. Converts (S)-scoulerine into (R,S)-cheilanthifoline. Catalyzes an oxidative reaction that does not incorporate oxygen into the product. This is Cheilanthifoline synthase (CYP719A5) from Eschscholzia californica (California poppy).